The sequence spans 485 residues: Palmitoyltransferase ZDHHC1 (485 aa).

The segment at 1 to 41 (MYKMNICNKPSNKTAPEKSVWTAPAQPSGPSPELQGQRSRR) is disordered. Residues 1–52 (MYKMNICNKPSNKTAPEKSVWTAPAQPSGPSPELQGQRSRRNGWSWPPHPLQ) are Cytoplasmic-facing. The interval 1–271 (MYKMNICNKP…GHLLCFHIYL (271 aa)) is mediates interaction with STING1. Residues 53–73 (IVAWLLYLFFAVIGFGILVPL) traverse the membrane as a helical segment. The Lumenal portion of the chain corresponds to 74-77 (LPHH). Residues 78–98 (WVPAGYACMGAIFAGHLVVHL) traverse the membrane as a helical segment. The Cytoplasmic portion of the chain corresponds to 99-185 (TAVSIDPADA…YRLFLHSVAS (87 aa)). Residues 134–184 (LHCNLCNVDVSARSKHCSACNKCVCGFDHHCKWLNNCVGERNYRLFLHSVA) form the DHHC domain. Residue C164 is the S-palmitoyl cysteine intermediate of the active site. Residues 186 to 206 (ALLGVLLLVLVATYVFVEFFV) form a helical membrane-spanning segment. Topologically, residues 207–241 (NPMRLRTNRHFEVLKNHTDVWFVFLPAAPVETQAP) are lumenal. A helical membrane pass occupies residues 242 to 262 (AILALAALLILLGLLSTALLG). Residues 263-485 (HLLCFHIYLM…RGRRVRPPFS (223 aa)) are Cytoplasmic-facing. 2 disordered regions span residues 324–358 (EPPG…GPPV) and 462–485 (LWPP…PPFS). Residues 475–485 (WRGRRVRPPFS) show a composition bias toward basic residues.

The protein belongs to the DHHC palmitoyltransferase family. Interacts with STING1; ZDHHC1 constitutively interacts with STING1 and in presence of DNA viruses activates it by promoting its cGAMP-induced oligomerization and the recruitment of downstream signaling components. Widely expressed with significant expression in heart, brain, placenta, lung, liver, kidney, testis, thymus and small intestine. Expressed at lower levels in adult pancreas and lung.

It is found in the endosome membrane. The protein resides in the endoplasmic reticulum membrane. It localises to the golgi apparatus. The enzyme catalyses L-cysteinyl-[protein] + hexadecanoyl-CoA = S-hexadecanoyl-L-cysteinyl-[protein] + CoA. In terms of biological role, palmitoyltransferase that catalyzes the addition of palmitate onto various protein substrates, such as NCDN and NLRP3. Has a palmitoyltransferase activity toward NCDN and regulates NCDN association with endosome membranes through this palmitoylation. Acts as an activator of the NLRP3 inflammasome by mediating palmitoylation of 'Cys-130' and 'Cys-958' of NLRP3, thereby promoting NLRP3 phosphorylation and activation by NEK7. Functionally, also has a palmitoyltransferase activity-independent function in DNA virus-triggered and CGAS-mediated innate immune response. Functions as an activator of STING1 by promoting its cGAMP-induced oligomerization and the recruitment of downstream signaling components. The protein is Palmitoyltransferase ZDHHC1 of Homo sapiens (Human).